A 427-amino-acid polypeptide reads, in one-letter code: Ribosomal protein uS12 methylthiotransferase RimO (427 aa).

The 116-residue stretch at 1 to 116 (MNFYVDVLGC…IAENIGKESI (116 aa)) folds into the MTTase N-terminal domain. Residues Cys10, Cys46, Cys79, Cys145, Cys149, and Cys152 each contribute to the [4Fe-4S] cluster site. Residues 131 to 360 (VDEKQYAYVK…MEEQSKISFE (230 aa)) form the Radical SAM core domain. A TRAM domain is found at 363–426 (EKMVGKTFKV…VYDLEGKIVE (64 aa)).

Belongs to the methylthiotransferase family. RimO subfamily. Requires [4Fe-4S] cluster as cofactor.

It localises to the cytoplasm. It catalyses the reaction L-aspartate(89)-[ribosomal protein uS12]-hydrogen + (sulfur carrier)-SH + AH2 + 2 S-adenosyl-L-methionine = 3-methylsulfanyl-L-aspartate(89)-[ribosomal protein uS12]-hydrogen + (sulfur carrier)-H + 5'-deoxyadenosine + L-methionine + A + S-adenosyl-L-homocysteine + 2 H(+). Its function is as follows. Catalyzes the methylthiolation of an aspartic acid residue of ribosomal protein uS12. In Thermosipho africanus (strain TCF52B), this protein is Ribosomal protein uS12 methylthiotransferase RimO.